A 419-amino-acid polypeptide reads, in one-letter code: Glutamyl-tRNA reductase (419 aa).

Substrate-binding positions include 49 to 52, Ser-107, 112 to 114, and Gln-118; these read TCNR and EPQ. Cys-50 (nucleophile) is an active-site residue. Residue 187–192 participates in NADP(+) binding; sequence GAGETI.

This sequence belongs to the glutamyl-tRNA reductase family. Homodimer.

The catalysed reaction is (S)-4-amino-5-oxopentanoate + tRNA(Glu) + NADP(+) = L-glutamyl-tRNA(Glu) + NADPH + H(+). The protein operates within porphyrin-containing compound metabolism; protoporphyrin-IX biosynthesis; 5-aminolevulinate from L-glutamyl-tRNA(Glu): step 1/2. Catalyzes the NADPH-dependent reduction of glutamyl-tRNA(Glu) to glutamate 1-semialdehyde (GSA). This chain is Glutamyl-tRNA reductase, found in Vibrio atlanticus (strain LGP32) (Vibrio splendidus (strain Mel32)).